The sequence spans 603 residues: Probable potassium transport system protein Kup (603 aa).

The next 12 helical transmembrane spans lie at 15–35, 43–63, 94–114, 135–155, 163–183, 209–229, 244–264, 283–303, 336–356, 365–385, 390–410, and 415–435; these read GLVF…IFLL, IIGV…VEYA, VAFV…DGVI, NIGQ…LFSV, ITWV…FSGI, GIIG…GEAL, AWRF…AFLI, ILYI…SQAM, IYIS…MLIF, AYGL…TSIF, NITK…FLLS, and IPHG…LILI.

It belongs to the HAK/KUP transporter (TC 2.A.72) family.

It is found in the cell membrane. The catalysed reaction is K(+)(in) + H(+)(in) = K(+)(out) + H(+)(out). Functionally, transport of potassium into the cell. Likely operates as a K(+):H(+) symporter. This is Probable potassium transport system protein Kup from Methanosarcina barkeri (strain Fusaro / DSM 804).